We begin with the raw amino-acid sequence, 122 residues long: Large ribosomal subunit protein uL14c (122 aa).

This sequence belongs to the universal ribosomal protein uL14 family. As to quaternary structure, part of the 50S ribosomal subunit.

The protein resides in the plastid. The protein localises to the chloroplast. Binds to 23S rRNA. The chain is Large ribosomal subunit protein uL14c from Calycanthus floridus var. glaucus (Eastern sweetshrub).